A 390-amino-acid chain; its full sequence is Nicotinate phosphoribosyltransferase (390 aa).

Phosphohistidine; by autocatalysis is present on His-211.

The protein belongs to the NAPRTase family. Transiently phosphorylated on a His residue during the reaction cycle. Phosphorylation strongly increases the affinity for substrates and increases the rate of nicotinate D-ribonucleotide production. Dephosphorylation regenerates the low-affinity form of the enzyme, leading to product release.

The catalysed reaction is nicotinate + 5-phospho-alpha-D-ribose 1-diphosphate + ATP + H2O = nicotinate beta-D-ribonucleotide + ADP + phosphate + diphosphate. Its pathway is cofactor biosynthesis; NAD(+) biosynthesis; nicotinate D-ribonucleotide from nicotinate: step 1/1. In terms of biological role, catalyzes the synthesis of beta-nicotinate D-ribonucleotide from nicotinate and 5-phospho-D-ribose 1-phosphate at the expense of ATP. The chain is Nicotinate phosphoribosyltransferase from Chromohalobacter salexigens (strain ATCC BAA-138 / DSM 3043 / CIP 106854 / NCIMB 13768 / 1H11).